The sequence spans 512 residues: Transmembrane protein 102 (512 aa).

Residues 1 to 267 (MASAVWGNAP…EAWPTLCPAQ (267 aa)) lie on the Extracellular side of the membrane. Positions 168–258 (PVPGGRDWIH…PGPQPSEARE (91 aa)) are disordered. Basic and acidic residues-rich tracts occupy residues 174-186 (DWIHPTDSREGPR) and 195-209 (PHSDIIEPEAHESLE). The span at 210–226 (KSPSNVSVPESPQQNLT) shows a compositional bias: polar residues. A helical transmembrane segment spans residues 268 to 284 (VAAWFFASLAAVAESLF). The Cytoplasmic segment spans residues 285–512 (PVPGAPRLVH…GLAGVGAGSH (228 aa)).

In terms of assembly, interacts with CSF2RB; this interaction occurs preferentially in the absence of CSF2.

It is found in the cell membrane. Its function is as follows. Selectively involved in CSF2 deprivation-induced apoptosis via a mitochondria-dependent pathway. In Bos taurus (Bovine), this protein is Transmembrane protein 102 (TMEM102).